A 567-amino-acid chain; its full sequence is MSRISRQAYADMFGPTVGDRVRLADTALWVEVEKDFTVYGEEVKFGGGKVIRDGMGQGQMLAAEAMDLVLTNALIIDHWGIVKADIGIKHGRIAVIGKAGNPDVQPGVNVPVGPGTEVIAAEGKIVTAGGVDSHIHFICPQQVDEALNSGVTTFIGGGTGPATGTNATTCTPGPWYLARMLQAADSLPINIGLLGKGNASRPEALREQIAAGAVGLKLHEDWGSTPAAIDCCLGVAEEMDIQVAIHTDTLNESGCIEDTLAAIGDRTIHTFHTEGAGGGHAPDIIRAAGQANVLPSSTNPTLPYTINTVDEHLDMLMVCHHLDPSIAEDVAFAESRIRRETIAAEDILHDMGAFAMTSSDSQAMGRVGEVVLRTWQVAHQMKLRRGPLAPDTYYSDNFRVKRYIAKYTINPALTHGIGHEVGSVEVGKLADLVLWSPAFFAVKPALVLKGGMIVTAPMGDINGSIPTPQPVHYRPMFGALGAARHATRMTFLPQAAMDRGLAEELNLRSLIGVVNGCRRVRKPDMVHNTLQPLIEVDAQTYQVRADGELLVCEPASELPLAQRYFLF.

Positions 134, 136, and 217 each coordinate Ni(2+). Residue K217 is modified to N6-carboxylysine. Position 219 (H219) interacts with substrate. Ni(2+) contacts are provided by H246 and H272. H320 acts as the Proton donor in catalysis. D360 contributes to the Ni(2+) binding site.

It belongs to the metallo-dependent hydrolases superfamily. Urease alpha subunit family. As to quaternary structure, heterotrimer of UreA (gamma), UreB (beta) and UreC (alpha) subunits. Three heterotrimers associate to form the active enzyme. The cofactor is Ni cation. In terms of processing, carboxylation allows a single lysine to coordinate two nickel ions.

It localises to the cytoplasm. It catalyses the reaction urea + 2 H2O + H(+) = hydrogencarbonate + 2 NH4(+). The protein operates within nitrogen metabolism; urea degradation; CO(2) and NH(3) from urea (urease route): step 1/1. This chain is Urease subunit alpha, found in Pseudomonas putida (strain GB-1).